Consider the following 916-residue polypeptide: DNA gyrase subunit A (916 aa).

The 503-residue stretch at 42-544 (LPDVRDGLKP…FGGDIADEDL (503 aa)) folds into the Topo IIA-type catalytic domain. The active-site O-(5'-phospho-DNA)-tyrosine intermediate is Y130. A GyrA-box motif is present at residues 571-577 (QRRGGRG). A compositionally biased stretch (acidic residues) spans 739–748 (SDDLEDETAD). Disordered stretches follow at residues 739–774 (SDDL…RGMR) and 897–916 (ESEL…EAEN).

Belongs to the type II topoisomerase GyrA/ParC subunit family. In terms of assembly, heterotetramer, composed of two GyrA and two GyrB chains. In the heterotetramer, GyrA contains the active site tyrosine that forms a transient covalent intermediate with DNA, while GyrB binds cofactors and catalyzes ATP hydrolysis.

Its subcellular location is the cytoplasm. The catalysed reaction is ATP-dependent breakage, passage and rejoining of double-stranded DNA.. Its function is as follows. A type II topoisomerase that negatively supercoils closed circular double-stranded (ds) DNA in an ATP-dependent manner to modulate DNA topology and maintain chromosomes in an underwound state. Negative supercoiling favors strand separation, and DNA replication, transcription, recombination and repair, all of which involve strand separation. Also able to catalyze the interconversion of other topological isomers of dsDNA rings, including catenanes and knotted rings. Type II topoisomerases break and join 2 DNA strands simultaneously in an ATP-dependent manner. The polypeptide is DNA gyrase subunit A (Neisseria gonorrhoeae).